A 203-amino-acid polypeptide reads, in one-letter code: E3 ubiquitin-protein ligase RNF152 (203 aa).

The segment at 12–55 (CQICFNYYSPRRRPKLLDCKHTCCSVCLQQMRTSQKDVRCPWCR) adopts an RING-type zinc-finger fold. The segment at 106 to 165 (ISKERTLLPGDMGCRLLPGSQQKSLTVVTIPAEQQPLQGGAPQEAVEEEPDRRGVAKSST) is necessary for interaction with RRAGA. The tract at residues 140–159 (QPLQGGAPQEAVEEEPDRRG) is disordered. Residues 167–187 (SGVCTVILVACVLVFLLGIVL) traverse the membrane as a helical segment.

Belongs to the RNF152 family. Interacts with RRAGA (inactive GDP-bound form); stimulated by amino acid starvation. Interacts with SEC16A. Ubiquitinated. Autoubiquitinated in vitro, leading to its degradation by the proteasome.

It is found in the lysosome membrane. The enzyme catalyses S-ubiquitinyl-[E2 ubiquitin-conjugating enzyme]-L-cysteine + [acceptor protein]-L-lysine = [E2 ubiquitin-conjugating enzyme]-L-cysteine + N(6)-ubiquitinyl-[acceptor protein]-L-lysine.. Its pathway is protein modification; protein ubiquitination. Its function is as follows. E3 ubiquitin-protein ligase that acts as a negative regulator of mTORC1 signaling by mediating ubiquitination of RagA/RRAGA and RHEB. Catalyzes 'Lys-63'-linked polyubiquitination of RagA/RRAGA in response to amino acid starvation, thereby regulating mTORC1 signaling. Also mediates monoubiquitination of RHEB, promoting its association with the TSC-TBC complex and subsequent inhibition. Also mediates 'Lys-48'-linked polyubiquitination of target proteins and their subsequent targeting to the proteasome for degradation. Induces apoptosis when overexpressed. The chain is E3 ubiquitin-protein ligase RNF152 from Rattus norvegicus (Rat).